The primary structure comprises 282 residues: Elongation factor Ts (282 aa).

Residues 80-83 (TDFV) form an involved in Mg(2+) ion dislocation from EF-Tu region.

Belongs to the EF-Ts family.

It is found in the cytoplasm. Functionally, associates with the EF-Tu.GDP complex and induces the exchange of GDP to GTP. It remains bound to the aminoacyl-tRNA.EF-Tu.GTP complex up to the GTP hydrolysis stage on the ribosome. The polypeptide is Elongation factor Ts (Chlamydia trachomatis serovar L2 (strain ATCC VR-902B / DSM 19102 / 434/Bu)).